The following is a 304-amino-acid chain: Aspartate carbamoyltransferase catalytic subunit (304 aa).

Carbamoyl phosphate is bound by residues Arg49 and Thr50. Lys77 lines the L-aspartate pocket. Residues Arg99, His127, and Gln130 each coordinate carbamoyl phosphate. 2 residues coordinate L-aspartate: Arg160 and Arg211. Positions 252 and 253 each coordinate carbamoyl phosphate.

This sequence belongs to the aspartate/ornithine carbamoyltransferase superfamily. ATCase family. As to quaternary structure, heterododecamer (2C3:3R2) of six catalytic PyrB chains organized as two trimers (C3), and six regulatory PyrI chains organized as three dimers (R2).

The catalysed reaction is carbamoyl phosphate + L-aspartate = N-carbamoyl-L-aspartate + phosphate + H(+). It functions in the pathway pyrimidine metabolism; UMP biosynthesis via de novo pathway; (S)-dihydroorotate from bicarbonate: step 2/3. Functionally, catalyzes the condensation of carbamoyl phosphate and aspartate to form carbamoyl aspartate and inorganic phosphate, the committed step in the de novo pyrimidine nucleotide biosynthesis pathway. This Bacillus cereus (strain ATCC 10987 / NRS 248) protein is Aspartate carbamoyltransferase catalytic subunit.